Consider the following 297-residue polypeptide: Homoserine kinase (297 aa).

82 to 92 (PVSRGLGSSAA) serves as a coordination point for ATP.

This sequence belongs to the GHMP kinase family. Homoserine kinase subfamily.

The protein localises to the cytoplasm. It carries out the reaction L-homoserine + ATP = O-phospho-L-homoserine + ADP + H(+). Its pathway is amino-acid biosynthesis; L-threonine biosynthesis; L-threonine from L-aspartate: step 4/5. In terms of biological role, catalyzes the ATP-dependent phosphorylation of L-homoserine to L-homoserine phosphate. The chain is Homoserine kinase from Clostridium botulinum (strain Loch Maree / Type A3).